Reading from the N-terminus, the 445-residue chain is Phosphoglucosamine mutase (445 aa).

Catalysis depends on Ser99, which acts as the Phosphoserine intermediate. Mg(2+)-binding residues include Ser99, Asp242, Asp244, and Asp246. Phosphoserine is present on Ser99.

The protein belongs to the phosphohexose mutase family. Mg(2+) serves as cofactor. In terms of processing, activated by phosphorylation.

The catalysed reaction is alpha-D-glucosamine 1-phosphate = D-glucosamine 6-phosphate. Functionally, catalyzes the conversion of glucosamine-6-phosphate to glucosamine-1-phosphate. This chain is Phosphoglucosamine mutase, found in Helicobacter acinonychis (strain Sheeba).